The following is a 501-amino-acid chain: Cytochrome P450 2J6 (501 aa).

A heme-binding site is contributed by Cys447.

It belongs to the cytochrome P450 family. The cofactor is heme.

The protein localises to the endoplasmic reticulum membrane. It localises to the microsome membrane. It catalyses the reaction an organic molecule + reduced [NADPH--hemoprotein reductase] + O2 = an alcohol + oxidized [NADPH--hemoprotein reductase] + H2O + H(+). This Mus musculus (Mouse) protein is Cytochrome P450 2J6 (Cyp2j6).